The chain runs to 348 residues: MSERTWSHLISALLNGTSLTADDTKWAMNEIMSGSATDAQIAGFAIALRAKGESVAEVRGLAQGMLDHAVTISVPGATLDIVGTGGDRAHTVNVSTMASIVASAAGARVVKHGNRAASSSCGTADVLERLGVIIDLDPADAVAVAEEVDITFCFAPLYHPSLKYAAKPRRELAVPTVFNFLGPLTNPARPTASAIGVFDRNMCEIMAGVFAERGVNALVFRGDDGLDELTTTTTSSVWIVADGSVRYEQLDPADLGIPRATPEALRGGDVEFNARVVREFLDGRPGPVRDAVLLNAAAALAAAEGVTGSLIETLRAQYQRAAEAVDSGAAKAKLDAWVESSQARAKQL.

5-phospho-alpha-D-ribose 1-diphosphate contacts are provided by residues Gly-83, 86–87, Thr-91, 93–96, 111–119, and Thr-123; these read GD, NVST, and KHGNRAASS. An anthranilate-binding site is contributed by Gly-83. Ser-95 lines the Mg(2+) pocket. Asn-114 serves as a coordination point for anthranilate. Residue Arg-169 coordinates anthranilate. Residues Asp-227 and Glu-228 each coordinate Mg(2+).

This sequence belongs to the anthranilate phosphoribosyltransferase family. As to quaternary structure, homodimer. Mg(2+) is required as a cofactor.

The enzyme catalyses N-(5-phospho-beta-D-ribosyl)anthranilate + diphosphate = 5-phospho-alpha-D-ribose 1-diphosphate + anthranilate. It functions in the pathway amino-acid biosynthesis; L-tryptophan biosynthesis; L-tryptophan from chorismate: step 2/5. In terms of biological role, catalyzes the transfer of the phosphoribosyl group of 5-phosphorylribose-1-pyrophosphate (PRPP) to anthranilate to yield N-(5'-phosphoribosyl)-anthranilate (PRA). This is Anthranilate phosphoribosyltransferase from Thermobifida fusca (strain YX).